Consider the following 501-residue polypeptide: Betaine aldehyde dehydrogenase, chloroplastic (501 aa).

A chloroplast-targeting transit peptide spans 1–7 (MAIRVPS). 238–243 (GSTATG) is an NAD(+) binding site. The Proton acceptor role is filled by Glu-260. The active-site Nucleophile is the Cys-294.

This sequence belongs to the aldehyde dehydrogenase family. As to quaternary structure, homodimer.

The protein localises to the plastid. It localises to the chloroplast. The catalysed reaction is betaine aldehyde + NAD(+) + H2O = glycine betaine + NADH + 2 H(+). It participates in amine and polyamine biosynthesis; betaine biosynthesis via choline pathway; betaine from betaine aldehyde: step 1/1. In Amaranthus hypochondriacus (Prince-of-Wales feather), this protein is Betaine aldehyde dehydrogenase, chloroplastic (BADH4).